Reading from the N-terminus, the 86-residue chain is Large ribosomal subunit protein bL31B (86 aa).

The protein belongs to the bacterial ribosomal protein bL31 family. Type B subfamily. Part of the 50S ribosomal subunit.

The polypeptide is Large ribosomal subunit protein bL31B (Chloroherpeton thalassium (strain ATCC 35110 / GB-78)).